The following is a 367-amino-acid chain: Anhydro-N-acetylmuramic acid kinase (367 aa).

11 to 18 (GTSLDGVD) contributes to the ATP binding site.

This sequence belongs to the anhydro-N-acetylmuramic acid kinase family.

It catalyses the reaction 1,6-anhydro-N-acetyl-beta-muramate + ATP + H2O = N-acetyl-D-muramate 6-phosphate + ADP + H(+). It functions in the pathway amino-sugar metabolism; 1,6-anhydro-N-acetylmuramate degradation. The protein operates within cell wall biogenesis; peptidoglycan recycling. Its function is as follows. Catalyzes the specific phosphorylation of 1,6-anhydro-N-acetylmuramic acid (anhMurNAc) with the simultaneous cleavage of the 1,6-anhydro ring, generating MurNAc-6-P. Is required for the utilization of anhMurNAc either imported from the medium or derived from its own cell wall murein, and thus plays a role in cell wall recycling. The protein is Anhydro-N-acetylmuramic acid kinase of Rhodopseudomonas palustris (strain ATCC BAA-98 / CGA009).